The primary structure comprises 528 residues: Ribonuclease Y (528 aa).

Residues 15 to 35 traverse the membrane as a helical segment; it reads SLLVFALICGSIIGYFLYSFF. Positions 217 to 277 constitute a KH domain; sequence NISVVNIPNE…IRREIAKKTL (61 aa). The region spanning 343 to 436 is the HD domain; that stretch reads VLKHSLEVAF…VAIADTLSSA (94 aa).

The protein belongs to the RNase Y family.

The protein resides in the cell membrane. In terms of biological role, endoribonuclease that initiates mRNA decay. In Onion yellows phytoplasma (strain OY-M), this protein is Ribonuclease Y.